The sequence spans 125 residues: Ribonuclease P protein component 1 (125 aa).

Positions M1–P13 are enriched in basic and acidic residues. The segment at M1 to A24 is disordered.

This sequence belongs to the eukaryotic/archaeal RNase P protein component 1 family. In terms of assembly, consists of a catalytic RNA component and at least 4-5 protein subunits.

It is found in the cytoplasm. The enzyme catalyses Endonucleolytic cleavage of RNA, removing 5'-extranucleotides from tRNA precursor.. Its function is as follows. Part of ribonuclease P, a protein complex that generates mature tRNA molecules by cleaving their 5'-ends. This chain is Ribonuclease P protein component 1, found in Thermococcus onnurineus (strain NA1).